The sequence spans 225 residues: Insulin-induced gene 2 protein (225 aa).

Over 1 to 28 (MAEGETKSPGPKKCGPYISSVTSQSVNL) the chain is Cytoplasmic. The helical transmembrane segment at 29-51 (MIRGVVLFFIGVFLALVLNLLQI) threads the bilayer. Residues 52–70 (QRNVTLFPPDVIASIFSSA) lie on the Lumenal side of the membrane. Residues 71–88 (WWVPPCCGTASAVIGLLY) form a helical membrane-spanning segment. Over 89–103 (PCIDRHLGEPHKFKR) the chain is Cytoplasmic. Residues 104 to 126 (EWSSVMRCVAVFVGINHASAKVD) traverse the membrane as a helical segment. The Lumenal segment spans residues 127–129 (FDN). Residues 130–148 (NIQLSLTLAALSIGLWWTF) traverse the membrane as a helical segment. The Cytoplasmic segment spans residues 149-153 (DRSRS). Residue Ser151 is modified to Phosphoserine. Residues 154 to 175 (GFGLGVGIAFLATLVTQLLVYN) form a helical membrane-spanning segment. Residues 176 to 189 (GVYQYTSPDFLYVR) are Lumenal-facing. The chain crosses the membrane as a helical span at residues 190-207 (SWLPCIFFAGGITMGNIG). The Cytoplasmic segment spans residues 208 to 225 (RQLAMYECKVIAEKSHQE). Cys215 bears the Cysteine sulfenic acid (-SOH); alternate mark. Cys215 is covalently cross-linked (Glycyl cysteine thioester (Cys-Gly) (interchain with G-Cter in ubiquitin); alternate). Positions 219–225 (AEKSHQE) match the KxHxx motif.

This sequence belongs to the INSIG family. Interacts with SCAP; interaction is direct and only takes place in the presence of sterols; it prevents interaction between SCAP and the coat protein complex II (COPII). Associates with the SCAP-SREBP complex (composed of SCAP and SREBF1/SREBP1 or SREBF2/SREBP2); association is mediated via its interaction with SCAP and only takes place in the presence of sterols. Interacts with RNF139. Interacts with RNF145. Phosphorylation at Ser-151 by PCK1 reduces binding to oxysterol, disrupting the interaction between INSIG2 and SCAP, thereby promoting nuclear translocation of SREBP proteins (SREBF1/SREBP1 or SREBF2/SREBP2) and subsequent transcription of downstream lipogenesis-related genes. In terms of processing, polyubiquitinated by AMFR/gp78 at Cys-215 in some tissues such as adipose tissues, undifferentiated myoblasts and liver, leading to its degradation. In differentiated myotubes, Cys-215 oxidation prevents ubiquitination at the same site, resulting in protein stabilization. Post-translationally, oxidized at Cys-215 in differentiated myotubes, preventing ubiquitination at the same site, and resulting in protein stabilization.

It is found in the endoplasmic reticulum membrane. Functionally, oxysterol-binding protein that mediates feedback control of cholesterol synthesis by controlling both endoplasmic reticulum to Golgi transport of SCAP and degradation of HMGCR. Acts as a negative regulator of cholesterol biosynthesis by mediating the retention of the SCAP-SREBP complex in the endoplasmic reticulum, thereby blocking the processing of sterol regulatory element-binding proteins (SREBPs) SREBF1/SREBP1 and SREBF2/SREBP2. Binds oxysterol, including 22-hydroxycholesterol, 24-hydroxycholesterol, 25-hydroxycholesterol and 27-hydroxycholesterol, regulating interaction with SCAP and retention of the SCAP-SREBP complex in the endoplasmic reticulum. In presence of oxysterol, interacts with SCAP, retaining the SCAP-SREBP complex in the endoplasmic reticulum, thereby preventing SCAP from escorting SREBF1/SREBP1 and SREBF2/SREBP2 to the Golgi. Sterol deprivation or phosphorylation by PCK1 reduce oxysterol-binding, disrupting the interaction between INSIG2 and SCAP, thereby promoting Golgi transport of the SCAP-SREBP complex, followed by processing and nuclear translocation of SREBF1/SREBP1 and SREBF2/SREBP2. Also regulates cholesterol synthesis by regulating degradation of HMGCR: initiates the sterol-mediated ubiquitin-mediated endoplasmic reticulum-associated degradation (ERAD) of HMGCR via recruitment of the reductase to the ubiquitin ligase RNF139. In Sus scrofa (Pig), this protein is Insulin-induced gene 2 protein.